Reading from the N-terminus, the 67-residue chain is UPF0437 protein y4xE (67 aa).

It belongs to the UPF0437 family.

In Sinorhizobium fredii (strain NBRC 101917 / NGR234), this protein is UPF0437 protein y4xE.